A 44-amino-acid chain; its full sequence is Poly-ADP-ribosylation-amplifying and CtIP-maintaining micropeptide (44 aa).

The segment at 1-44 (MAASGGTKKAQSGGRRLREPSSRPSRRARQRPRRGALRKAGRFL) is disordered. A compositionally biased stretch (basic residues) spans 24–44 (PSRRARQRPRRGALRKAGRFL).

As to quaternary structure, interacts with KLHL15; preventing ubiquitination and degradation of RBBP8/CtIP. Interacts with PARP1.

It localises to the nucleus. The protein localises to the nucleolus. Its subcellular location is the chromosome. In terms of biological role, micropeptide that acts as a regulator of DNA repair both by preventing KLHL15-mediated ubiquitination and degradation of RBBP8/CtIP, and by promoting the poly-ADP-ribosyltransferase activity of PARP1. Prevents KLHL15-mediated ubiquitination of RBBP8/CtIP by competitively blocking the association between KLHL15 and RBBP8/CtIP. Recruited to DNA damage sites via association with poly-ADP-ribose chains, and enhances the poly-ADP-ribosyltransferase activity of PARP1. This Homo sapiens (Human) protein is Poly-ADP-ribosylation-amplifying and CtIP-maintaining micropeptide.